The following is a 308-amino-acid chain: 4-hydroxy-3-methylbut-2-enyl diphosphate reductase (308 aa).

Residue Cys-12 coordinates [4Fe-4S] cluster. His-41 and His-74 together coordinate (2E)-4-hydroxy-3-methylbut-2-enyl diphosphate. Dimethylallyl diphosphate-binding residues include His-41 and His-74. Isopentenyl diphosphate-binding residues include His-41 and His-74. Residue Cys-96 coordinates [4Fe-4S] cluster. His-124 is a binding site for (2E)-4-hydroxy-3-methylbut-2-enyl diphosphate. His-124 contacts dimethylallyl diphosphate. His-124 lines the isopentenyl diphosphate pocket. Residue Glu-126 is the Proton donor of the active site. Thr-166 provides a ligand contact to (2E)-4-hydroxy-3-methylbut-2-enyl diphosphate. Cys-196 is a binding site for [4Fe-4S] cluster. (2E)-4-hydroxy-3-methylbut-2-enyl diphosphate is bound by residues Ser-224, Ser-225, Asn-226, and Ser-268. Residues Ser-224, Ser-225, Asn-226, and Ser-268 each contribute to the dimethylallyl diphosphate site. 4 residues coordinate isopentenyl diphosphate: Ser-224, Ser-225, Asn-226, and Ser-268.

This sequence belongs to the IspH family. Requires [4Fe-4S] cluster as cofactor.

It carries out the reaction isopentenyl diphosphate + 2 oxidized [2Fe-2S]-[ferredoxin] + H2O = (2E)-4-hydroxy-3-methylbut-2-enyl diphosphate + 2 reduced [2Fe-2S]-[ferredoxin] + 2 H(+). The enzyme catalyses dimethylallyl diphosphate + 2 oxidized [2Fe-2S]-[ferredoxin] + H2O = (2E)-4-hydroxy-3-methylbut-2-enyl diphosphate + 2 reduced [2Fe-2S]-[ferredoxin] + 2 H(+). Its pathway is isoprenoid biosynthesis; dimethylallyl diphosphate biosynthesis; dimethylallyl diphosphate from (2E)-4-hydroxy-3-methylbutenyl diphosphate: step 1/1. It functions in the pathway isoprenoid biosynthesis; isopentenyl diphosphate biosynthesis via DXP pathway; isopentenyl diphosphate from 1-deoxy-D-xylulose 5-phosphate: step 6/6. Catalyzes the conversion of 1-hydroxy-2-methyl-2-(E)-butenyl 4-diphosphate (HMBPP) into a mixture of isopentenyl diphosphate (IPP) and dimethylallyl diphosphate (DMAPP). Acts in the terminal step of the DOXP/MEP pathway for isoprenoid precursor biosynthesis. This chain is 4-hydroxy-3-methylbut-2-enyl diphosphate reductase, found in Vesicomyosocius okutanii subsp. Calyptogena okutanii (strain HA).